The primary structure comprises 198 residues: Dephospho-CoA kinase (198 aa).

One can recognise a DPCK domain in the interval 4–198; the sequence is IIGITGGIAS…DSQLRRLQNE (195 aa). 12-17 contributes to the ATP binding site; the sequence is ASGKST.

It belongs to the CoaE family.

It is found in the cytoplasm. It carries out the reaction 3'-dephospho-CoA + ATP = ADP + CoA + H(+). It participates in cofactor biosynthesis; coenzyme A biosynthesis; CoA from (R)-pantothenate: step 5/5. Its function is as follows. Catalyzes the phosphorylation of the 3'-hydroxyl group of dephosphocoenzyme A to form coenzyme A. The sequence is that of Dephospho-CoA kinase from Streptococcus mutans serotype c (strain ATCC 700610 / UA159).